Here is a 60-residue protein sequence, read N- to C-terminus: Cytotoxin 4 (60 aa).

4 disulfides stabilise this stretch: Cys-3–Cys-21, Cys-14–Cys-38, Cys-42–Cys-53, and Cys-54–Cys-59.

It belongs to the three-finger toxin family. Short-chain subfamily. Type IA cytotoxin sub-subfamily. Monomer in solution; Homodimer and oligomer in the presence of negatively charged lipids forming a pore with a size ranging between 20 and 30 Angstroms. In terms of tissue distribution, expressed by the venom gland.

The protein resides in the secreted. It is found in the target cell membrane. Its function is as follows. Shows cytolytic activity on many different cells by forming pore in lipid membranes. In vivo, increases heart rate or kills the animal by cardiac arrest. In addition, it binds to heparin with high affinity, interacts with Kv channel-interacting protein 1 (KCNIP1) in a calcium-independent manner, and binds to integrin alpha-V/beta-3 (ITGAV/ITGB3) with moderate affinity. The chain is Cytotoxin 4 from Naja mossambica (Mozambique spitting cobra).